Reading from the N-terminus, the 344-residue chain is Heat-inducible transcription repressor HrcA (344 aa).

This sequence belongs to the HrcA family.

In terms of biological role, negative regulator of class I heat shock genes (grpE-dnaK-dnaJ and groELS operons). Prevents heat-shock induction of these operons. The protein is Heat-inducible transcription repressor HrcA of Geobacillus stearothermophilus (Bacillus stearothermophilus).